A 566-amino-acid chain; its full sequence is Beta-1,2-xylosyltransferease XAX1 (566 aa).

The interval 1-25 is disordered; the sequence is MTSTAYSRPSKLPGGGNGSDRRLPP. Topologically, residues 1–43 are cytoplasmic; sequence MTSTAYSRPSKLPGGGNGSDRRLPPRLMRGLTTKIEPKKLGVG. A helical; Signal-anchor for type II membrane protein transmembrane segment spans residues 44 to 64; that stretch reads LLAGCCLALLTYVSLAKLFAI. At 65–566 the chain is on the lumenal side; the sequence is YSPVFASTAN…LLQALDRLQQ (502 aa). An N-linked (GlcNAc...) asparagine glycan is attached at Asn74. Residues 78-180 form a disordered region; it reads LMQNSPPSSP…AAGGDTKIKC (103 aa). A compositionally biased stretch (pro residues) spans 84-94; the sequence is PSSPETGPIPP. 5 N-linked (GlcNAc...) asparagine glycosylation sites follow: Asn104, Asn368, Asn429, Asn515, and Asn549.

The protein belongs to the glycosyltransferase 61 family. As to expression, highly expressed in young panicles.

It is found in the golgi apparatus membrane. The protein operates within glycan metabolism. Its function is as follows. Glycosyltransferase involved in the xylosylation of xylan, the major hemicellulose (non-cellulosic component) of primary and secondary walls of angiosperms. Possesses beta-1,2-xylosyltransferase activity, transferring xylose from UDP-xylose to the xylan backbone. This chain is Beta-1,2-xylosyltransferease XAX1, found in Oryza sativa subsp. japonica (Rice).